Here is a 224-residue protein sequence, read N- to C-terminus: MSTWGQINLMDPASPIQMEMMLFHDHAMAILIGIFTLVSLLGVKLCFNTLSTRTMHEAQLLETLWTILPAFLLVWLALPSLRLLYLLDEQGSEGIILKAIGHQWYWSYEMPSMNISNFDSYMIPEEDLKPGDYRLLEVDNRPMVPYGLDINVITTSADVIHAWALPSMGVKMDAVPGRLNSMGFHANLPGIYYGQCSEICGANHSFMPITVEAIDVKDFIKMCN.

Residues 1–26 (MSTWGQINLMDPASPIQMEMMLFHDH) lie on the Mitochondrial intermembrane side of the membrane. A helical membrane pass occupies residues 27–48 (AMAILIGIFTLVSLLGVKLCFN). Residues 49–62 (TLSTRTMHEAQLLE) lie on the Mitochondrial matrix side of the membrane. Residues 63–82 (TLWTILPAFLLVWLALPSLR) form a helical membrane-spanning segment. Residues 83-224 (LLYLLDEQGS…DVKDFIKMCN (142 aa)) are Mitochondrial intermembrane-facing. Histidine 161, cysteine 196, glutamate 198, cysteine 200, histidine 204, and methionine 207 together coordinate Cu cation. Glutamate 198 provides a ligand contact to Mg(2+).

Belongs to the cytochrome c oxidase subunit 2 family. As to quaternary structure, component of the cytochrome c oxidase (complex IV, CIV), a multisubunit enzyme composed of a catalytic core of 3 subunits and several supernumerary subunits. The complex exists as a monomer or a dimer and forms supercomplexes (SCs) in the inner mitochondrial membrane with ubiquinol-cytochrome c oxidoreductase (cytochrome b-c1 complex, complex III, CIII). The cofactor is Cu cation.

The protein localises to the mitochondrion inner membrane. It catalyses the reaction 4 Fe(II)-[cytochrome c] + O2 + 8 H(+)(in) = 4 Fe(III)-[cytochrome c] + 2 H2O + 4 H(+)(out). In terms of biological role, component of the cytochrome c oxidase, the last enzyme in the mitochondrial electron transport chain which drives oxidative phosphorylation. The respiratory chain contains 3 multisubunit complexes succinate dehydrogenase (complex II, CII), ubiquinol-cytochrome c oxidoreductase (cytochrome b-c1 complex, complex III, CIII) and cytochrome c oxidase (complex IV, CIV), that cooperate to transfer electrons derived from NADH and succinate to molecular oxygen, creating an electrochemical gradient over the inner membrane that drives transmembrane transport and the ATP synthase. Cytochrome c oxidase is the component of the respiratory chain that catalyzes the reduction of oxygen to water. Electrons originating from reduced cytochrome c in the intermembrane space (IMS) are transferred via the dinuclear copper A center (CU(A)) of subunit 2 and heme A of subunit 1 to the active site in subunit 1, a binuclear center (BNC) formed by heme A3 and copper B (CU(B)). The BNC reduces molecular oxygen to 2 water molecules using 4 electrons from cytochrome c in the IMS and 4 protons from the mitochondrial matrix. The chain is Cytochrome c oxidase subunit 2 (COII) from Albinaria caerulea (Land snail).